The chain runs to 244 residues: 23S rRNA (guanosine-2'-O-)-methyltransferase RlmB (244 aa).

S-adenosyl-L-methionine contacts are provided by Gly-196, Ile-216, and Leu-225.

The protein belongs to the class IV-like SAM-binding methyltransferase superfamily. RNA methyltransferase TrmH family. RlmB subfamily. Homodimer.

The protein localises to the cytoplasm. It catalyses the reaction guanosine(2251) in 23S rRNA + S-adenosyl-L-methionine = 2'-O-methylguanosine(2251) in 23S rRNA + S-adenosyl-L-homocysteine + H(+). In terms of biological role, specifically methylates the ribose of guanosine 2251 in 23S rRNA. This Pectobacterium atrosepticum (strain SCRI 1043 / ATCC BAA-672) (Erwinia carotovora subsp. atroseptica) protein is 23S rRNA (guanosine-2'-O-)-methyltransferase RlmB.